Consider the following 156-residue polypeptide: Putative pre-16S rRNA nuclease (156 aa).

Belongs to the YqgF nuclease family.

Its subcellular location is the cytoplasm. In terms of biological role, could be a nuclease involved in processing of the 5'-end of pre-16S rRNA. The polypeptide is Putative pre-16S rRNA nuclease (Albidiferax ferrireducens (strain ATCC BAA-621 / DSM 15236 / T118) (Rhodoferax ferrireducens)).